A 305-amino-acid polypeptide reads, in one-letter code: tRNA uridine(34) hydroxylase (305 aa).

One can recognise a Rhodanese domain in the interval 125-219 (ADENTVVVDT…YLEEVPREQS (95 aa)). Catalysis depends on C179, which acts as the Cysteine persulfide intermediate.

The protein belongs to the TrhO family.

The enzyme catalyses uridine(34) in tRNA + AH2 + O2 = 5-hydroxyuridine(34) in tRNA + A + H2O. Functionally, catalyzes oxygen-dependent 5-hydroxyuridine (ho5U) modification at position 34 in tRNAs. The sequence is that of tRNA uridine(34) hydroxylase from Brucella suis (strain ATCC 23445 / NCTC 10510).